We begin with the raw amino-acid sequence, 325 residues long: Replication factor C small subunit (325 aa).

54–61 serves as a coordination point for ATP; sequence GPAGTGKT.

Belongs to the activator 1 small subunits family. RfcS subfamily. In terms of assembly, heteromultimer composed of small subunits (RfcS) and large subunits (RfcL).

Functionally, part of the RFC clamp loader complex which loads the PCNA sliding clamp onto DNA. The polypeptide is Replication factor C small subunit (Haloarcula marismortui (strain ATCC 43049 / DSM 3752 / JCM 8966 / VKM B-1809) (Halobacterium marismortui)).